We begin with the raw amino-acid sequence, 220 residues long: Cell division protein DedD (220 aa).

A helical membrane pass occupies residues 9–29; the sequence is LVGTIVLVALGVIVLPGLLDG. Disordered stretches follow at residues 46–84 and 97–137; these read KAGDRDEPDMMPAATQALPTQPPEGAAEEVRAGDAAAPS and FEPE…EEKA. A compositionally biased stretch (low complexity) spans 57–70; it reads PAATQALPTQPPEG. Residues 100 to 109 are compositionally biased toward pro residues; that stretch reads EPAPVAPPKP. Basic and acidic residues-rich tracts occupy residues 110–119 and 127–137; these read KPVEPPKPKV and PEPKPVVEEKA. The SPOR domain maps to 138–217; it reads APTGKAYVVQ…SGLSGVVMGY (80 aa).

Belongs to the DedD family.

Its subcellular location is the cell inner membrane. Its function is as follows. Non-essential cell division protein that could be required for efficient cell constriction. The sequence is that of Cell division protein DedD from Escherichia coli (strain K12).